Here is a 238-residue protein sequence, read N- to C-terminus: Ribonuclease PH (238 aa).

Phosphate-binding positions include Arg-86 and 124–126 (GTR).

The protein belongs to the RNase PH family. In terms of assembly, homohexameric ring arranged as a trimer of dimers.

It carries out the reaction tRNA(n+1) + phosphate = tRNA(n) + a ribonucleoside 5'-diphosphate. Functionally, phosphorolytic 3'-5' exoribonuclease that plays an important role in tRNA 3'-end maturation. Removes nucleotide residues following the 3'-CCA terminus of tRNAs; can also add nucleotides to the ends of RNA molecules by using nucleoside diphosphates as substrates, but this may not be physiologically important. Probably plays a role in initiation of 16S rRNA degradation (leading to ribosome degradation) during starvation. This chain is Ribonuclease PH, found in Vibrio vulnificus (strain CMCP6).